Reading from the N-terminus, the 277-residue chain is Ribosomal RNA small subunit methyltransferase G (277 aa).

S-adenosyl-L-methionine contacts are provided by residues Gly-128, Phe-133, 188–189, and Arg-198; that span reads SE.

The protein belongs to the methyltransferase superfamily. RNA methyltransferase RsmG family.

It is found in the cytoplasm. The catalysed reaction is guanosine(527) in 16S rRNA + S-adenosyl-L-methionine = N(7)-methylguanosine(527) in 16S rRNA + S-adenosyl-L-homocysteine. Functionally, specifically methylates the N7 position of guanine in position 527 of 16S rRNA. This chain is Ribosomal RNA small subunit methyltransferase G, found in Nitrobacter winogradskyi (strain ATCC 25391 / DSM 10237 / CIP 104748 / NCIMB 11846 / Nb-255).